Here is a 126-residue protein sequence, read N- to C-terminus: Fluoride-specific ion channel FluC (126 aa).

4 helical membrane-spanning segments follow: residues proline 3 to leucine 23, tyrosine 36 to phenylalanine 56, leucine 68 to alanine 88, and tryptophan 99 to leucine 119. Positions 76 and 79 each coordinate Na(+).

It belongs to the fluoride channel Fluc/FEX (TC 1.A.43) family.

It localises to the cell inner membrane. The enzyme catalyses fluoride(in) = fluoride(out). With respect to regulation, na(+) is not transported, but it plays an essential structural role and its presence is essential for fluoride channel function. Functionally, fluoride-specific ion channel. Important for reducing fluoride concentration in the cell, thus reducing its toxicity. This Cupriavidus pinatubonensis (strain JMP 134 / LMG 1197) (Cupriavidus necator (strain JMP 134)) protein is Fluoride-specific ion channel FluC.